We begin with the raw amino-acid sequence, 724 residues long: 4-alpha-glucanotransferase (724 aa).

This sequence belongs to the disproportionating enzyme family.

It localises to the cytoplasm. It catalyses the reaction Transfers a segment of a (1-&gt;4)-alpha-D-glucan to a new position in an acceptor, which may be glucose or a (1-&gt;4)-alpha-D-glucan.. This chain is 4-alpha-glucanotransferase (malQ), found in Mycobacterium bovis (strain ATCC BAA-935 / AF2122/97).